Here is a 417-residue protein sequence, read N- to C-terminus: Serine--tRNA ligase (417 aa).

226 to 228 (TSE) provides a ligand contact to L-serine. Residues 257 to 259 (RRE) and Val273 contribute to the ATP site. Glu280 provides a ligand contact to L-serine. ATP is bound at residue 344–347 (EVTS). Thr379 lines the L-serine pocket.

This sequence belongs to the class-II aminoacyl-tRNA synthetase family. Type-1 seryl-tRNA synthetase subfamily. In terms of assembly, homodimer. The tRNA molecule binds across the dimer.

The protein localises to the cytoplasm. The enzyme catalyses tRNA(Ser) + L-serine + ATP = L-seryl-tRNA(Ser) + AMP + diphosphate + H(+). The catalysed reaction is tRNA(Sec) + L-serine + ATP = L-seryl-tRNA(Sec) + AMP + diphosphate + H(+). It participates in aminoacyl-tRNA biosynthesis; selenocysteinyl-tRNA(Sec) biosynthesis; L-seryl-tRNA(Sec) from L-serine and tRNA(Sec): step 1/1. In terms of biological role, catalyzes the attachment of serine to tRNA(Ser). Is also able to aminoacylate tRNA(Sec) with serine, to form the misacylated tRNA L-seryl-tRNA(Sec), which will be further converted into selenocysteinyl-tRNA(Sec). The protein is Serine--tRNA ligase of Tropheryma whipplei (strain TW08/27) (Whipple's bacillus).